A 506-amino-acid chain; its full sequence is Heat stress transcription factor A-1 (506 aa).

Residues 157-207 (MEEEIEMLKRDKNVLMQELVRLRQQQQTTDHQLQTLGKRLQGMEQRQQQMM) adopt a coiled-coil conformation. The interval 164-214 (LKRDKNVLMQELVRLRQQQQTTDHQLQTLGKRLQGMEQRQQQMMSFLAKAM) is hydrophobic repeat HR-A/B. The segment at 231–254 (RRRIVASNKKRRLPKQDGSLDSES) is disordered. Residues 232–243 (RRIVASNKKRRL) are compositionally biased toward basic residues. A Nuclear localization signal motif is present at residues 239–242 (KKRR). The short motif at 449–456 (DSFWEQFL) is the AHA element.

Belongs to the HSF family. Class A subfamily. As to quaternary structure, homotrimer. In terms of processing, exhibits temperature-dependent phosphorylation.

It localises to the nucleus. Its function is as follows. Transcriptional regulator that specifically binds DNA of heat shock promoter elements (HSE). The polypeptide is Heat stress transcription factor A-1 (HSFA1) (Oryza sativa subsp. japonica (Rice)).